The sequence spans 95 residues: Small ribosomal subunit protein uS19 (95 aa).

It belongs to the universal ribosomal protein uS19 family.

Protein S19 forms a complex with S13 that binds strongly to the 16S ribosomal RNA. In Chloroflexus aggregans (strain MD-66 / DSM 9485), this protein is Small ribosomal subunit protein uS19.